The chain runs to 301 residues: tRNA uridine(34) hydroxylase (301 aa).

The region spanning 121-215 is the Rhodanese domain; the sequence is RSDDVVLIDT…YLEEVPAENS (95 aa). The Cysteine persulfide intermediate role is filled by cysteine 175.

It belongs to the TrhO family.

The catalysed reaction is uridine(34) in tRNA + AH2 + O2 = 5-hydroxyuridine(34) in tRNA + A + H2O. Functionally, catalyzes oxygen-dependent 5-hydroxyuridine (ho5U) modification at position 34 in tRNAs. The protein is tRNA uridine(34) hydroxylase of Ruegeria pomeroyi (strain ATCC 700808 / DSM 15171 / DSS-3) (Silicibacter pomeroyi).